We begin with the raw amino-acid sequence, 74 residues long: MKEKEFQSKPLLTKREREVFELLVQDKTTKEIASELFISEKTVRNHISNAMQKLGVKGRSQAVVELLRMGELEL.

The HTH luxR-type domain occupies 5 to 70 (EFQSKPLLTK…QAVVELLRMG (66 aa)). The H-T-H motif DNA-binding region spans 29 to 48 (TKEIASELFISEKTVRNHIS).

Its function is as follows. Involved in the regulation of spore formation. Directs the transcription of several genes that encode structural components of the protein coat that encases the mature spore (CotB, CotC, CotG, CotS, CotV, CotW, CotX, CotY and CotZ). Also controls the cgeAB and cgeCDE operons. The protein is Spore germination protein GerE (gerE) of Bacillus subtilis (strain 168).